The following is a 199-amino-acid chain: ATP-dependent Clp protease proteolytic subunit (199 aa).

The active-site Nucleophile is the Ser99. Residue His124 is part of the active site.

The protein belongs to the peptidase S14 family. Fourteen ClpP subunits assemble into 2 heptameric rings which stack back to back to give a disk-like structure with a central cavity, resembling the structure of eukaryotic proteasomes.

It localises to the cytoplasm. It catalyses the reaction Hydrolysis of proteins to small peptides in the presence of ATP and magnesium. alpha-casein is the usual test substrate. In the absence of ATP, only oligopeptides shorter than five residues are hydrolyzed (such as succinyl-Leu-Tyr-|-NHMec, and Leu-Tyr-Leu-|-Tyr-Trp, in which cleavage of the -Tyr-|-Leu- and -Tyr-|-Trp bonds also occurs).. Its function is as follows. Cleaves peptides in various proteins in a process that requires ATP hydrolysis. Has a chymotrypsin-like activity. Plays a major role in the degradation of misfolded proteins. The protein is ATP-dependent Clp protease proteolytic subunit of Lactococcus lactis subsp. cremoris (strain SK11).